We begin with the raw amino-acid sequence, 245 residues long: Large ribosomal subunit protein uL4 (245 aa).

Residues 1-13 (MSRVATSDPSVTA) are compositionally biased toward polar residues. Disordered stretches follow at residues 1-28 (MSRV…EGGS), 56-114 (ARQG…QRTP), and 224-245 (TSTA…EENK). The span at 59-71 (GTHDTKTRGEVRG) shows a compositional bias: basic and acidic residues. Over residues 72–83 (GGRKPYRQKGTG) the composition is skewed to basic residues.

It belongs to the universal ribosomal protein uL4 family. In terms of assembly, part of the 50S ribosomal subunit.

In terms of biological role, one of the primary rRNA binding proteins, this protein initially binds near the 5'-end of the 23S rRNA. It is important during the early stages of 50S assembly. It makes multiple contacts with different domains of the 23S rRNA in the assembled 50S subunit and ribosome. Functionally, forms part of the polypeptide exit tunnel. The chain is Large ribosomal subunit protein uL4 from Frankia casuarinae (strain DSM 45818 / CECT 9043 / HFP020203 / CcI3).